A 329-amino-acid polypeptide reads, in one-letter code: Olfactory receptor 5AL1 (329 aa).

Topologically, residues 1–44 (MCALKGFLEENFYTYSVAKGNHSTVYEFILLGLTDNAELQVTLF) are extracellular. The N-linked (GlcNAc...) asparagine glycan is linked to N21. A helical transmembrane segment spans residues 45–65 (GIFLVVYLASFMGNFGLIMLI). At 66–73 (QISPQLHT) the chain is on the cytoplasmic side. A helical membrane pass occupies residues 74-94 (PMYFFLSHLAFVDFSFTSSVA). Over 95–113 (PNTLVNFLCEVKSITFYAC) the chain is Extracellular. C113 and C205 form a disulfide bridge. A helical transmembrane segment spans residues 114–134 (AIQVCCFITFVVCELYLLSIM). Residues 135 to 157 (AYDRYVAICNPLLYVILIPRKLC) lie on the Cytoplasmic side of the membrane. A helical transmembrane segment spans residues 158–178 (IKLIASTYVYGFTVGLVQTVA). Topologically, residues 179–220 (TSYLSFCDSNVINHFYHDDVPLVALACSDTHVKELMLLIIAG) are extracellular. The helical transmembrane segment at 221-241 (FNTLCSLVIVLISYGFIFFAI) threads the bilayer. At 242-253 (LRIHSAEGRQKA) the chain is on the cytoplasmic side. Residues 254-274 (FSTSASHLTSITIFYGTIIFM) traverse the membrane as a helical segment. Topologically, residues 275–287 (YPQPKSSHSLNMD) are extracellular. Residues 288–308 (KVASVFNVVVIPTLNPLIYSL) form a helical membrane-spanning segment. The Cytoplasmic segment spans residues 309–329 (RNQEVKNALKRIIEKLCLAVK).

Belongs to the G-protein coupled receptor 1 family.

Its subcellular location is the cell membrane. In terms of biological role, odorant receptor. This is Olfactory receptor 5AL1 (OR5AL1) from Homo sapiens (Human).